Consider the following 336-residue polypeptide: Structure-specific endonuclease subunit SLX1 (336 aa).

Residues 21-104 (SFYGVYLLQS…QHCHETRHIK (84 aa)) form the GIY-YIG domain. The disordered stretch occupies residues 37–57 (FYIGSTPDPPRRLRQHNGDLK). The SLX1-type zinc finger occupies 214–290 (CALCLEPIEQ…PATVNRCCSC (77 aa)).

It belongs to the SLX1 family. Forms a heterodimer with SLX4. The cofactor is a divalent metal cation.

The protein resides in the nucleus. In terms of biological role, catalytic subunit of the SLX1-SLX4 structure-specific endonuclease that resolves DNA secondary structures generated during DNA repair and recombination. Has endonuclease activity towards branched DNA substrates, introducing single-strand cuts in duplex DNA close to junctions with ss-DNA. This is Structure-specific endonuclease subunit SLX1 from Scheffersomyces stipitis (strain ATCC 58785 / CBS 6054 / NBRC 10063 / NRRL Y-11545) (Yeast).